The sequence spans 500 residues: Cryptochrome DASH (500 aa).

The Photolyase/cryptochrome alpha/beta domain occupies 4–138 (KTVLVWYRND…PVRSFWGTTL (135 aa)).

It belongs to the DNA photolyase class-1 family. The cofactor is FAD. (6R)-5,10-methylene-5,6,7,8-tetrahydrofolate is required as a cofactor.

Functionally, may have a photoreceptor function. Binds DNA; probably functions as a transcriptional repressor. This is Cryptochrome DASH (cry) from Gloeobacter violaceus (strain ATCC 29082 / PCC 7421).